The sequence spans 380 residues: Cytochrome b (380 aa).

4 helical membrane-spanning segments follow: residues 34–54 (FGSL…FLAM), 78–99 (WLLR…YFHI), 114–134 (WNIG…GYVL), and 179–199 (FFTF…INLL). Heme b contacts are provided by histidine 84 and histidine 98. Histidine 183 provides a ligand contact to heme b. Histidine 202 contributes to the a ubiquinone binding site. 4 consecutive transmembrane segments (helical) span residues 227–247 (YKDL…STFA), 289–309 (LGGV…PIIH), 321–341 (IAKT…WIGG), and 348–368 (FITI…LLIP).

The protein belongs to the cytochrome b family. The cytochrome bc1 complex contains 3 respiratory subunits (MT-CYB, CYC1 and UQCRFS1), 2 core proteins (UQCRC1 and UQCRC2) and probably 6 low-molecular weight proteins. Requires heme b as cofactor.

The protein resides in the mitochondrion inner membrane. Component of the ubiquinol-cytochrome c reductase complex (complex III or cytochrome b-c1 complex) that is part of the mitochondrial respiratory chain. The b-c1 complex mediates electron transfer from ubiquinol to cytochrome c. Contributes to the generation of a proton gradient across the mitochondrial membrane that is then used for ATP synthesis. This chain is Cytochrome b (mt-cyb), found in Pelophylax plancyi (Korean pond frog).